A 571-amino-acid polypeptide reads, in one-letter code: Endonuclease/exonuclease/phosphatase family domain-containing protein 1 (571 aa).

The segment at 1 to 20 is disordered; sequence MGSTLGCHRSIPRDPSDLSH. Gly2 carries the N-myristoyl glycine lipid modification. Residues 11–20 are compositionally biased toward basic and acidic residues; that stretch reads IPRDPSDLSH. Ser16, Ser21, and Ser25 each carry phosphoserine. One can recognise a HhH domain in the interval 38-67; it reads ERLNINTATEEELMTLPGVTRAVARSIVEY. Residues Ser106, Ser110, Ser162, and Ser175 each carry the phosphoserine modification. The interval 202 to 227 is disordered; that stretch reads SRPPSTHTNGGLTFTAKPHPSPTSLS. The span at 204–213 shows a compositional bias: polar residues; the sequence is PPSTHTNGGL. Thr267 bears the Phosphothreonine mark. A Phosphoserine modification is found at Ser430. Residues 548 to 571 are disordered; it reads RKEGPRSGNGLTLERSEANIKHER. Basic and acidic residues predominate over residues 561-571; it reads ERSEANIKHER.

This is Endonuclease/exonuclease/phosphatase family domain-containing protein 1 (EEPD1) from Bos taurus (Bovine).